Reading from the N-terminus, the 940-residue chain is Isoleucine--tRNA ligase (940 aa).

The 'HIGH' region signature appears at 58 to 68 (PYANGDIHIGH). Glu-564 is an L-isoleucyl-5'-AMP binding site. The 'KMSKS' region signature appears at 605 to 609 (KMSKS). Lys-608 contributes to the ATP binding site. Cys-903, Cys-906, Cys-923, and Cys-926 together coordinate Zn(2+).

This sequence belongs to the class-I aminoacyl-tRNA synthetase family. IleS type 1 subfamily. In terms of assembly, monomer. It depends on Zn(2+) as a cofactor.

The protein resides in the cytoplasm. It catalyses the reaction tRNA(Ile) + L-isoleucine + ATP = L-isoleucyl-tRNA(Ile) + AMP + diphosphate. Functionally, catalyzes the attachment of isoleucine to tRNA(Ile). As IleRS can inadvertently accommodate and process structurally similar amino acids such as valine, to avoid such errors it has two additional distinct tRNA(Ile)-dependent editing activities. One activity is designated as 'pretransfer' editing and involves the hydrolysis of activated Val-AMP. The other activity is designated 'posttransfer' editing and involves deacylation of mischarged Val-tRNA(Ile). The polypeptide is Isoleucine--tRNA ligase (Shewanella pealeana (strain ATCC 700345 / ANG-SQ1)).